A 150-amino-acid chain; its full sequence is Flagellar assembly factor FliW (150 aa).

It belongs to the FliW family. As to quaternary structure, interacts with translational regulator CsrA and flagellin(s).

It is found in the cytoplasm. Functionally, acts as an anti-CsrA protein, binds CsrA and prevents it from repressing translation of its target genes, one of which is flagellin. Binds to flagellin and participates in the assembly of the flagellum. The polypeptide is Flagellar assembly factor FliW (Caldanaerobacter subterraneus subsp. tengcongensis (strain DSM 15242 / JCM 11007 / NBRC 100824 / MB4) (Thermoanaerobacter tengcongensis)).